Consider the following 489-residue polypeptide: MFS-type transporter MFS19 (489 aa).

Basic and acidic residues predominate over residues 1 to 12 (MAHSTAGDRDPE). The disordered stretch occupies residues 1 to 42 (MAHSTAGDRDPEVGSEQHSSIAQLHTESMSDPWGDSNSPENP). Residues 16–41 (EQHSSIAQLHTESMSDPWGDSNSPEN) show a composition bias toward polar residues. A helical membrane pass occupies residues 52 to 72 (FHVAIVSIFTLTANLAATMFA). N83 and N86 each carry an N-linked (GlcNAc...) asparagine glycan. Transmembrane regions (helical) follow at residues 91–111 (AMTVSLYVLGFAFGPLLLAPL), 127–147 (VYIAFTVGCAFSTNVSMFLVF), 149–169 (FLCGCAASGPMSIGGGTVADI), 180–200 (ALFAMGPLLGPVLGPIIGGYV), 208–228 (WTFRIILIMSGIIGLATMFFM), 282–302 (PIVLLISLYTGVLFGLIFLLF), 321–341 (GLAYLGLGIGMFLGLVVFSIL), 361–381 (LILMKWFGPITPLGCFMYGWS), 388–408 (WIVPILGTSIIGFGSLFVVIP), 425–445 (ALAANLLVRSPFGAFLGLVAA), and 454–474 (GWGNSVLGFITLAFTPVPWLF).

This sequence belongs to the major facilitator superfamily.

The protein localises to the cell membrane. In terms of biological role, MFS-type efflux pump involved in the modulation susceptibility to various compounds including cumyl hydroperoxide, potassium superoxide, many singlet oxygen-generating compounds (eosin Y, rose Bengal, hematoporphyrin, methylene blue, and cercosporin), and the cell wall biosynthesis inhibitor Congo red. Involved in oxidative stress tolerance, colonization, and lesion formation. In Alternaria alternata (Alternaria rot fungus), this protein is MFS-type transporter MFS19.